Reading from the N-terminus, the 648-residue chain is Phosphatidylinositol polyphosphate 5-phosphatase type IV (648 aa).

Residues 1–64 (MPSKSACLRH…PLSMPAKPSN (64 aa)) form a disordered region. A compositionally biased stretch (polar residues) spans 36–54 (TSASLPAADSQSSQTNSMP). Repeat copies occupy residues 59–62 (PAKP) and 76–79 (PQPP). The interval 59 to 243 (PAKPSNQNLQ…AHSNLGPSRP (185 aa)) is 4 X 4 AA repeats of P-X-X-P. Positions 99–158 (RFRGSQEDLTVQNGASPCRGSLQDSVAQSPAYSRPLPCLSTSLQEIPKPRRATGSEGGSP) are disordered. A Phosphoserine modification is found at Ser-103. Polar residues predominate over residues 120–129 (LQDSVAQSPA). Repeat unit 3 spans residues 147–150 (PRRA). Residue Thr-197 is modified to Phosphothreonine. Copy 4 of the repeat occupies 240 to 243 (PSRP). Phosphoserine is present on residues Ser-245 and Ser-260. Position 645 is a cysteine methyl ester (Cys-645). A lipid anchor (S-farnesyl cysteine) is attached at Cys-645. Positions 646–648 (TVS) are cleaved as a propeptide — removed in mature form.

The protein belongs to the inositol 1,4,5-trisphosphate 5-phosphatase type IV family. In terms of assembly, interacts (when prenylated) with PDE6D; this is important for normal location in cilia.

The protein localises to the cytoplasm. It is found in the cytoskeleton. The protein resides in the cilium axoneme. Its subcellular location is the golgi apparatus. It localises to the golgi stack membrane. The protein localises to the cell membrane. It is found in the cell projection. The protein resides in the ruffle. Its subcellular location is the nucleus. The catalysed reaction is a 1,2-diacyl-sn-glycero-3-phospho-(1D-myo-inositol-4,5-bisphosphate) + H2O = a 1,2-diacyl-sn-glycero-3-phospho-(1D-myo-inositol 4-phosphate) + phosphate. It catalyses the reaction a 1,2-diacyl-sn-glycero-3-phospho-(1D-myo-inositol-3,4,5-trisphosphate) + H2O = a 1,2-diacyl-sn-glycero-3-phospho-(1D-myo-inositol-3,4-bisphosphate) + phosphate. The enzyme catalyses a 1,2-diacyl-sn-glycero-3-phospho-(1D-myo-inositol-3,5-bisphosphate) + H2O = a 1,2-diacyl-sn-glycero-3-phospho-(1D-myo-inositol-3-phosphate) + phosphate. Its function is as follows. Phosphatidylinositol (PtdIns) phosphatase that specifically hydrolyzes the 5-phosphate of phosphatidylinositol-3,4,5-trisphosphate (PtdIns(3,4,5)P3), phosphatidylinositol 4,5-bisphosphate PtdIns (4,5)P2 and phosphatidylinositol 3,5-bisphosphate (PtdIns(3,5)P2). Specific for lipid substrates, inactive towards water soluble inositol phosphates. Plays an essential role in the primary cilium by controlling ciliary growth and phosphoinositide 3-kinase (PI3K) signaling and stability. This is Phosphatidylinositol polyphosphate 5-phosphatase type IV (Inpp5e) from Rattus norvegicus (Rat).